The following is a 747-amino-acid chain: MIQLQNTFIFIALTIFTSASTTSLKNETKPLNTISTLAAQTNISNPEEDLFDTNGAPKSDTVNASTTTDRHKIPRWVNEQKMQKRLHAEPAGNTVQFRCAVQGARPITVDWYKDGEPIKKNGRLGGYKFRQRNQQISLESVIMSDRAKYMCVAHNKYGSINHTYELDVVARIPIPPVLSADGMKNQTVKVGSTVTFRCRIVYSDAHPHVEWLKYNVNVTVLKRAGINTTDAEMEKLTLKNVSFADAGEYTCLAGNSIGVSHVSAWLTVLPVVDENDVWTEEIPQDTHYLIYIFGVVCFIILLAFIVYMCNSRYQNKDPPRLIPIENPDNIPPMSKMEEPVMLFGNEQAWRRMCLPHADHIEINIQPDLQWELKREDILLHERIDEGFFGQVFRADLIRCAGGRKEKVDAAVKMLKSTRTEKDMLDLLTEMDQMKRVGKHKNIVNLLGVCTQNGILWLVTEYAQKGNLRDYLRRNRPSELQYELSTPDSPAPPRDEPLTLRALMSASHQVARGMEYLSQKKCIHRDLAARNVLVANDFVMKIADFGLARDIRSNDYYRKETRGHLPYKWMALEAMTDNMFTHATDVWSFGILLWEIFSLGGSPYPGVKTHDLVRFLRNGDRLEQPQFASSELYRLMRDCWEESPRRRPQFRQLVEDLDRMLASSSSLEYIDLNSPCEADYLPSDVDSNEDTESRDSANATGEDSDSVFEPIDGHGAHAYEVDEAGPLLNPQPDANIVCNGHARMQSDV.

Residues 1-24 form the signal peptide; sequence MIQLQNTFIFIALTIFTSASTTSL. At 25-288 the chain is on the extracellular side; it reads KNETKPLNTI…TEEIPQDTHY (264 aa). 3 N-linked (GlcNAc...) asparagine glycosylation sites follow: N26, N42, and N63. The interval 47–68 is disordered; it reads EEDLFDTNGAPKSDTVNASTTT. 2 consecutive Ig-like C2-type domains span residues 74 to 167 and 175 to 267; these read PRWV…YELD and PPVL…AWLT. A disulfide bond links C99 and C151. 5 N-linked (GlcNAc...) asparagine glycosylation sites follow: N161, N185, N217, N227, and N240. The cysteines at positions 198 and 251 are disulfide-linked. A helical membrane pass occupies residues 289–309; the sequence is LIYIFGVVCFIILLAFIVYMC. Over 310–747 the chain is Cytoplasmic; that stretch reads NSRYQNKDPP…NGHARMQSDV (438 aa). Positions 377–660 constitute a Protein kinase domain; it reads ILLHERIDEG…QLVEDLDRML (284 aa). Residues 383 to 391 and K412 contribute to the ATP site; that span reads IDEGFFGQV. The Proton acceptor role is filled by D525. At Y556 the chain carries Phosphotyrosine; by autocatalysis. A disordered region spans residues 679-731; the sequence is YLPSDVDSNEDTESRDSANATGEDSDSVFEPIDGHGAHAYEVDEAGPLLNPQP. Residues 710–719 are compositionally biased toward basic and acidic residues; sequence IDGHGAHAYE.

Belongs to the protein kinase superfamily. Tyr protein kinase family. Fibroblast growth factor receptor subfamily.

It is found in the membrane. It catalyses the reaction L-tyrosyl-[protein] + ATP = O-phospho-L-tyrosyl-[protein] + ADP + H(+). Its function is as follows. Receptor for basic fibroblast growth factor. The sequence is that of Fibroblast growth factor receptor (FGFR) from Ciona intestinalis (Transparent sea squirt).